A 713-amino-acid chain; its full sequence is Calpain-1 catalytic subunit (713 aa).

One can recognise a Calpain catalytic domain in the interval 55-354 (LFQDDAFPPV…FTKLEICNLT (300 aa)). Residues Cys-115, His-272, and Asn-296 contribute to the active site. Position 354 is a phosphothreonine (Thr-354). Residues 355-525 (PDALKSRTLR…KKAGTQELDD (171 aa)) form a domain III region. Residues 526–541 (QIQANLPDEKVLSEEE) are linker. Residues 542–712 (IDDNFKTLFS…LFKWLQLTMF (171 aa)) are domain IV. EF-hand domains are found at residues 557–575 (DMEI…IISK), 584–609 (FSLE…LVEF), 614–649 (NRIR…AGFK), and 679–713 (VRLE…TMFA). Positions 597, 599, 601, 603, 608, 627, 629, 631, 633, and 638 each coordinate Ca(2+).

Belongs to the peptidase C2 family. In terms of assembly, forms a heterodimer with a small (regulatory) subunit CAPNS1. Ca(2+) serves as cofactor. In terms of processing, undergoes calcium-induced successive autoproteolytic cleavages that generate a membrane-bound 78 kDa active form and an intracellular 75 kDa active form. Calpastatin reduces with high efficiency the transition from 78 kDa to 75 kDa calpain forms.

Its subcellular location is the cytoplasm. It localises to the cell membrane. It carries out the reaction Broad endopeptidase specificity.. Its activity is regulated as follows. Activated by micromolar concentrations of calcium and inhibited by calpastatin. Its function is as follows. Calcium-regulated non-lysosomal thiol-protease which catalyzes limited proteolysis of substrates involved in cytoskeletal remodeling and signal transduction. Proteolytically cleaves CTBP1 at 'Asn-364', 'Gly-377' and 'His-399'. Cleaves and activates caspase-7 (CASP7). The polypeptide is Calpain-1 catalytic subunit (Rattus norvegicus (Rat)).